Reading from the N-terminus, the 185-residue chain is Large ribosomal subunit protein uL5 (185 aa).

The protein belongs to the universal ribosomal protein uL5 family. As to quaternary structure, part of the 50S ribosomal subunit; part of the 5S rRNA/L5/L18/L25 subcomplex. Contacts the 5S rRNA and the P site tRNA. Forms a bridge to the 30S subunit in the 70S ribosome.

In terms of biological role, this is one of the proteins that bind and probably mediate the attachment of the 5S RNA into the large ribosomal subunit, where it forms part of the central protuberance. In the 70S ribosome it contacts protein S13 of the 30S subunit (bridge B1b), connecting the 2 subunits; this bridge is implicated in subunit movement. Contacts the P site tRNA; the 5S rRNA and some of its associated proteins might help stabilize positioning of ribosome-bound tRNAs. The polypeptide is Large ribosomal subunit protein uL5 (Rhizobium leguminosarum bv. trifolii (strain WSM2304)).